Reading from the N-terminus, the 176-residue chain is NAD(P)H-quinone oxidoreductase subunit 6, chloroplastic (176 aa).

Helical transmembrane passes span 10–30 (FLVV…LLFN), 33–53 (IYSA…YILA), 61–81 (AQLL…VMFM), 92–112 (LWTV…VSLM), and 152–172 (FFLP…GAIA).

Belongs to the complex I subunit 6 family. As to quaternary structure, NDH is composed of at least 16 different subunits, 5 of which are encoded in the nucleus.

The protein localises to the plastid. It is found in the chloroplast thylakoid membrane. The catalysed reaction is a plastoquinone + NADH + (n+1) H(+)(in) = a plastoquinol + NAD(+) + n H(+)(out). It catalyses the reaction a plastoquinone + NADPH + (n+1) H(+)(in) = a plastoquinol + NADP(+) + n H(+)(out). Functionally, NDH shuttles electrons from NAD(P)H:plastoquinone, via FMN and iron-sulfur (Fe-S) centers, to quinones in the photosynthetic chain and possibly in a chloroplast respiratory chain. The immediate electron acceptor for the enzyme in this species is believed to be plastoquinone. Couples the redox reaction to proton translocation, and thus conserves the redox energy in a proton gradient. The sequence is that of NAD(P)H-quinone oxidoreductase subunit 6, chloroplastic (ndhG) from Cucumis sativus (Cucumber).